Reading from the N-terminus, the 389-residue chain is STE20-related kinase adapter protein alpha (389 aa).

A Protein kinase domain is found at tyrosine 11–phenylalanine 321.

Belongs to the protein kinase superfamily. STE Ser/Thr protein kinase family. STE20 subfamily. As to quaternary structure, component of a trimeric complex composed of STK11/LKB1, STRAD (STRADA or STRADB) and CAB39/MO25 (CAB39/MO25alpha or CAB39L/MO25beta): the complex tethers STK11/LKB1 in the cytoplasm and stimulates its catalytic activity. In terms of tissue distribution, expressed in brain, hypothalamus, heart and skeletal muscle.

The protein localises to the nucleus. Its subcellular location is the cytoplasm. Functionally, pseudokinase which, in complex with CAB39/MO25 (CAB39/MO25alpha or CAB39L/MO25beta), binds to and activates STK11/LKB1. Adopts a closed conformation typical of active protein kinases and binds STK11/LKB1 as a pseudosubstrate, promoting conformational change of STK11/LKB1 in an active conformation. The protein is STE20-related kinase adapter protein alpha (STRADA) of Gallus gallus (Chicken).